Here is a 525-residue protein sequence, read N- to C-terminus: Cytochrome P450 714A2 (525 aa).

Topologically, residues 1-3 (MES) are lumenal. The chain crosses the membrane as a helical; Signal-anchor for type III membrane protein span at residues 4-24 (LVVHTVNAIWCIVIVGIFSVG). Residues 25-525 (YHVYGRAVVE…PQHGVVIRVV (501 aa)) are Cytoplasmic-facing. Cys-475 is a heme binding site.

This sequence belongs to the cytochrome P450 family. It depends on heme as a cofactor. In terms of tissue distribution, expressed in the shoot apical meristem (SAM) and petioles of young leaves, in the leaf margin and petiole vein of cotyledons, and at low levels in the filaments of developing flowers. Not detected in siliques.

It is found in the endoplasmic reticulum membrane. In terms of biological role, involved in the inactivation of early gibberellin (GA) intermediates. This Arabidopsis thaliana (Mouse-ear cress) protein is Cytochrome P450 714A2 (CYP714A2).